Here is a 354-residue protein sequence, read N- to C-terminus: UDP-N-acetylglucosamine--N-acetylmuramyl-(pentapeptide) pyrophosphoryl-undecaprenol N-acetylglucosamine transferase (354 aa).

Residues Ser-196 and Gln-288 each coordinate UDP-N-acetyl-alpha-D-glucosamine.

The protein belongs to the glycosyltransferase 28 family. MurG subfamily.

It localises to the cell membrane. The catalysed reaction is Mur2Ac(oyl-L-Ala-gamma-D-Glu-L-Lys-D-Ala-D-Ala)-di-trans,octa-cis-undecaprenyl diphosphate + UDP-N-acetyl-alpha-D-glucosamine = beta-D-GlcNAc-(1-&gt;4)-Mur2Ac(oyl-L-Ala-gamma-D-Glu-L-Lys-D-Ala-D-Ala)-di-trans,octa-cis-undecaprenyl diphosphate + UDP + H(+). It participates in cell wall biogenesis; peptidoglycan biosynthesis. In terms of biological role, cell wall formation. Catalyzes the transfer of a GlcNAc subunit on undecaprenyl-pyrophosphoryl-MurNAc-pentapeptide (lipid intermediate I) to form undecaprenyl-pyrophosphoryl-MurNAc-(pentapeptide)GlcNAc (lipid intermediate II). This Streptococcus suis (strain 98HAH33) protein is UDP-N-acetylglucosamine--N-acetylmuramyl-(pentapeptide) pyrophosphoryl-undecaprenol N-acetylglucosamine transferase.